The primary structure comprises 237 residues: MQKQAELYRGKAKTVYSTENPDLLVLEFRNDTSAGDGARIEQFDRKGMVNNKFNYFIMSKLAEAGIPTQMERLLSDTECLVKKLDMVPVECVVRNRTAGSLVKRLGIEEGIELNPPLFDLFLKNDAMHDPMVNESYCETFGWVSKENLARMKELTYKANDVLKKLFDDAGLILVDFKLEFGLYKGEVVLGDEFSPDGSRLWDKETLEKMDKDRFRQSLGGLIEAYEAVARRLGVQLD.

The protein belongs to the SAICAR synthetase family.

It carries out the reaction 5-amino-1-(5-phospho-D-ribosyl)imidazole-4-carboxylate + L-aspartate + ATP = (2S)-2-[5-amino-1-(5-phospho-beta-D-ribosyl)imidazole-4-carboxamido]succinate + ADP + phosphate + 2 H(+). It functions in the pathway purine metabolism; IMP biosynthesis via de novo pathway; 5-amino-1-(5-phospho-D-ribosyl)imidazole-4-carboxamide from 5-amino-1-(5-phospho-D-ribosyl)imidazole-4-carboxylate: step 1/2. This chain is Phosphoribosylaminoimidazole-succinocarboxamide synthase, found in Escherichia coli O7:K1 (strain IAI39 / ExPEC).